A 60-amino-acid chain; its full sequence is Large ribosomal subunit protein uL30 (60 aa).

Belongs to the universal ribosomal protein uL30 family. Part of the 50S ribosomal subunit.

The polypeptide is Large ribosomal subunit protein uL30 (Shewanella baltica (strain OS223)).